The following is a 115-amino-acid chain: Rubredoxin (115 aa).

In terms of domain architecture, Rubredoxin-like spans 15-66; the sequence is SPNHECRACGYVYIPSQGDQKTSVSPGTPFEALPLNWKCPVCGAPRNYFIST. Fe cation-binding residues include Cys20, Cys23, Cys53, and Cys56.

The protein belongs to the rubredoxin family. It depends on Fe(3+) as a cofactor.

Functionally, rubredoxin is a small nonheme, iron protein lacking acid-labile sulfide. Its single Fe, chelated to 4 Cys, functions as an electron acceptor and may also stabilize the conformation of the molecule. Could be involved in hydrogenase-linked redox processes. The protein is Rubredoxin (rub) of Synechocystis sp. (strain ATCC 27184 / PCC 6803 / Kazusa).